The following is a 352-amino-acid chain: C-C chemokine receptor type 5 (352 aa).

At 1-30 (MDYQVSSPTYDIDYYTSEPCQKINVKQIAA) the chain is on the extracellular side. Tyr-3 carries the post-translational modification Sulfotyrosine. O-linked (GalNAc...) serine glycosylation is found at Ser-6 and Ser-7. Tyr-10, Tyr-14, and Tyr-15 each carry sulfotyrosine. Disulfide bonds link Cys-20-Cys-269 and Cys-101-Cys-178. The helical transmembrane segment at 31–58 (RLLPPLYSLVFIFGFVGNILVVLILINC) threads the bilayer. The Cytoplasmic portion of the chain corresponds to 59–68 (KRLKSMTDIY). The chain crosses the membrane as a helical span at residues 69 to 89 (LLNLAISDLLFLLTVPFWAHY). The Extracellular portion of the chain corresponds to 90 to 102 (AAAQWDFGNTMCQ). A helical transmembrane segment spans residues 103-124 (LLTGLYFIGFFSGIFFIILLTI). The Cytoplasmic segment spans residues 125-141 (DRYLAIVHAVFALKART). Residues 142-166 (VTFGVVTSVITWVVAVFASLPRIIF) form a helical membrane-spanning segment. The Extracellular segment spans residues 167-198 (TRSQREGLHYTCSSHFPYSQYQFWKNFQTLKI). A helical transmembrane segment spans residues 199-218 (VILGLVLPLLVMVICYSGIL). Residues 219–235 (KTLLRCRNEKKRHRAVR) lie on the Cytoplasmic side of the membrane. Residues 236-260 (LIFTIMIVYFLFWAPYNIVLLLNTF) traverse the membrane as a helical segment. Residues 261-277 (QEFFGLNNCSSSNRLDQ) are Extracellular-facing. Residues 278–301 (AMQVTETLGMTHCCINPIIYAFVG) traverse the membrane as a helical segment. The Cytoplasmic segment spans residues 302–352 (EKFRNYLLVFFQKHIAKRFCKCCSIFQQEAPERASSVYTRSTGEQETSVGL). Residues Cys-321, Cys-323, and Cys-324 are each lipidated (S-palmitoyl cysteine). A phosphoserine; by BARK1 mark is found at Ser-336, Ser-337, Ser-342, and Ser-349.

The protein belongs to the G-protein coupled receptor 1 family. As to quaternary structure, interacts with PRAF2. Efficient ligand binding to CCL3/MIP-1alpha and CCL4/MIP-1beta requires sulfation, O-glycosylation and sialic acid modifications. Glycosylation on Ser-6 is required for efficient binding of CCL4. Interacts with GRK2. Interacts with ARRB1 and ARRB2. Interacts with CNIH4. Interacts with S100A4; this interaction stimulates T-lymphocyte chemotaxis. Sulfated on at least 2 of the N-terminal tyrosines. Sulfation is required for efficient binding of the chemokines, CCL3 and CCL4. Post-translationally, palmitoylation in the C-terminal is important for cell surface expression. In terms of processing, phosphorylation on serine residues in the C-terminal is stimulated by binding CC chemokines especially by APO-RANTES. O-glycosylated, but not N-glycosylated. Ser-6 appears to be the major site even if Ser-7 may be also O-glycosylated. Also sialylated glycans present which contribute to chemokine binding. Thr-16 and Ser-17 may also be glycosylated and, if so, with small moieties such as a T-antigen.

It localises to the cell membrane. Functionally, receptor for a number of inflammatory CC-chemokines including CCL3/MIP-1-alpha, CCL4/MIP-1-beta and RANTES and subsequently transduces a signal by increasing the intracellular calcium ion level. May play a role in the control of granulocytic lineage proliferation or differentiation. Participates in T-lymphocyte migration to the infection site by acting as a chemotactic receptor. This Chlorocebus tantalus (Tantalus monkey) protein is C-C chemokine receptor type 5 (CCR5).